A 359-amino-acid polypeptide reads, in one-letter code: Mitochondrial glutathione transporter SLC25A39 (359 aa).

The Mitochondrial intermembrane portion of the chain corresponds to 1 to 14; the sequence is MADQDPAGISPLQQ. 3 Solcar repeats span residues 9-151, 159-243, and 253-347; these read ISPL…LKAF, SDLY…VKSW, and TSVG…GKSF. The helical transmembrane segment at 15-35 threads the bilayer; sequence MVASGTGAVVTSLFMTPLDVV. The Mitochondrial matrix portion of the chain corresponds to 36–121; that stretch reads KVRLQSQRPS…VKIVRHEGTR (86 aa). [2Fe-2S] cluster-binding residues include Cys-74, Cys-78, Cys-88, and Cys-94. The helical transmembrane segment at 122–142 threads the bilayer; sequence TLWSGLPATLVMTVPATAIYF. Residues 143-160 lie on the Mitochondrial intermembrane side of the membrane; that stretch reads TAYDQLKAFLCGRALTSD. Residues 161–181 traverse the membrane as a helical segment; it reads LYAPMVAGALARLGTVTVISP. The Mitochondrial matrix segment spans residues 182–214; that stretch reads LELMRTKLQAQHVSYRELGACVRTAVAQGGWRS. A helical membrane pass occupies residues 215 to 235; the sequence is LWLGWGPTALRDVPFSALYWF. Residues 236–258 lie on the Mitochondrial intermembrane side of the membrane; that stretch reads NYELVKSWLNGFRPKDQTSVGMS. A helical transmembrane segment spans residues 259 to 279; that stretch reads FVAGGISGTVAAVLTLPFDVV. Topologically, residues 280–317 are mitochondrial matrix; that stretch reads KTQRQVALGAMEAVRVNPLHVDSTWLLLRRIRAESGTK. A helical membrane pass occupies residues 318 to 338; sequence GLFAGFLPRIIKAAPSCAIMI. The Mitochondrial intermembrane segment spans residues 339–359; that stretch reads STYEFGKSFFQRLNQDRLLGG.

This sequence belongs to the mitochondrial carrier (TC 2.A.29) family. Post-translationally, cleaved and degraded by AFG3L2; degradation by AFG3L2 is regulated by the ability of SLC25A39 to bind iron-sulfur. In absence of mitochondrial glutathione, SLC25A39 binds iron-sulfur, preventing cleavage and degradation by AFG3L2. The presence of mitochondrial glutathione prevents iron-sulfur-binding to SLC25A39, promoting cleavage and degradation by AFG3L2. As to expression, expressed in many tissues. Abundant in testis and kidney.

It localises to the mitochondrion inner membrane. The enzyme catalyses glutathione(in) = glutathione(out). Its activity is regulated as follows. The activity of SLC25A39 is regulated by levels of mitochondrial glutathione via its ability to bind [2Fe-2S] iron-sulfur cluster. Upon physiological levels of mitochondrial glutathione, glutathione prevents iron-sulfur-binding to SLC25A39 promoting cleavage and degradation by AFG3L2. Upon depletion of mitochondrial glutathione, SLC25A39 binds iron-sulfur, preventing cleavage and degradation by AFG3L2. Functionally, mitochondrial transporter required for glutathione import into mitochondria. Glutathione, which plays key roles in oxidative metabolism, is produced exclusively in the cytosol and is imported in many organelles. Mitochondrial glutathione is required for the activity and stability of proteins containing iron-sulfur clusters, as well as erythropoiesis. This is Mitochondrial glutathione transporter SLC25A39 from Homo sapiens (Human).